Consider the following 354-residue polypeptide: Type II methylase M.HgiDII (354 aa).

The 342-residue stretch at 3–344 (GAVIDLFCGV…KSIKRFLEGL (342 aa)) folds into the SAM-dependent MTase C5-type domain. Cys-79 is an active-site residue.

Belongs to the class I-like SAM-binding methyltransferase superfamily. C5-methyltransferase family.

The enzyme catalyses a 2'-deoxycytidine in DNA + S-adenosyl-L-methionine = a 5-methyl-2'-deoxycytidine in DNA + S-adenosyl-L-homocysteine + H(+). Functionally, a methylase that recognizes the double-stranded sequence 5'-GTCGAC-3', methylates C-? on both strands and protects the DNA from cleavage by the HgiDII endonuclease. This is Type II methylase M.HgiDII from Herpetosiphon aurantiacus (Herpetosiphon giganteus).